A 440-amino-acid chain; its full sequence is Protein ABHD8 (440 aa).

A disordered region spans residues 123–158 (DPAGSDGRSAPGSGSGSGSGSGSGGRRRRARRPKRT). Low complexity predominate over residues 124–134 (PAGSDGRSAPG). Over residues 135 to 146 (SGSGSGSGSGSG) the composition is skewed to gly residues. Residues 147–158 (GRRRRARRPKRT) are compositionally biased toward basic residues. In terms of domain architecture, AB hydrolase-1 spans 178–280 (VLFFIHGVGG…HKVIMINGGG (103 aa)). Active-site charge relay system residues include Ser-253, Asp-371, and His-399.

Belongs to the AB hydrolase superfamily. As to quaternary structure, interacts with NLRP3 (via NACHT and LLR domains); this interaction is enhanced in the presence of NLRP3 inflammasome inducers, such as ATP, nigericin, silica, or alum. Interacts with ZDHHC12.

Its subcellular location is the cytoplasm. In terms of biological role, negatively regulates NLRP3-driven inflammation. Promotes NLRP3 degradation through the chaperone-mediated autophagy (CMA) pathway, hence attenuating inflammasome activation and IL1B secretion. Acts by recruiting palmitoyltransferase ZDHHC12 to NLRP3, facilitating NLRP3 palmitoylation and subsequent degradation. The chain is Protein ABHD8 from Macaca fascicularis (Crab-eating macaque).